The following is a 347-amino-acid chain: Gamma-glutamyl hydrolase B (347 aa).

Residues M1 to T22 form the signal peptide. Positions I23–N314 constitute a Gamma-glutamyl hydrolase domain. The Nucleophile role is filled by C128. N152, N158, and N201 each carry an N-linked (GlcNAc...) asparagine glycan. The active-site Proton donor is H240. N273, N314, and N318 each carry an N-linked (GlcNAc...) asparagine glycan.

The protein belongs to the peptidase C26 family.

It is found in the secreted. The protein localises to the extracellular space. It carries out the reaction (6S)-5,6,7,8-tetrahydrofolyl-(gamma-L-Glu)(n) + (n-1) H2O = (6S)-5,6,7,8-tetrahydrofolate + (n-1) L-glutamate. The chain is Gamma-glutamyl hydrolase B (gghB) from Dictyostelium discoideum (Social amoeba).